The chain runs to 226 residues: Cytidylate kinase (226 aa).

11 to 19 (GPAAAGKST) lines the ATP pocket.

This sequence belongs to the cytidylate kinase family. Type 1 subfamily.

Its subcellular location is the cytoplasm. It catalyses the reaction CMP + ATP = CDP + ADP. The enzyme catalyses dCMP + ATP = dCDP + ADP. The sequence is that of Cytidylate kinase from Bacillus licheniformis (strain ATCC 14580 / DSM 13 / JCM 2505 / CCUG 7422 / NBRC 12200 / NCIMB 9375 / NCTC 10341 / NRRL NRS-1264 / Gibson 46).